The primary structure comprises 488 residues: 3-octaprenyl-4-hydroxybenzoate carboxy-lyase (488 aa).

Asn172 lines the Mn(2+) pocket. Residues 175–177 (IYR), 189–191 (RWL), and 194–195 (RG) contribute to the prenylated FMN site. Position 238 (Glu238) interacts with Mn(2+). Asp287 (proton donor) is an active-site residue.

This sequence belongs to the UbiD family. As to quaternary structure, homohexamer. It depends on prenylated FMN as a cofactor. The cofactor is Mn(2+).

The protein localises to the cell membrane. It catalyses the reaction a 4-hydroxy-3-(all-trans-polyprenyl)benzoate + H(+) = a 2-(all-trans-polyprenyl)phenol + CO2. It functions in the pathway cofactor biosynthesis; ubiquinone biosynthesis. Catalyzes the decarboxylation of 3-octaprenyl-4-hydroxy benzoate to 2-octaprenylphenol, an intermediate step in ubiquinone biosynthesis. The sequence is that of 3-octaprenyl-4-hydroxybenzoate carboxy-lyase from Azotobacter vinelandii (strain DJ / ATCC BAA-1303).